Here is a 545-residue protein sequence, read N- to C-terminus: Chaperonin GroEL 4 (545 aa).

Residues 30–33 (TLGP), K51, 87–91 (DGTTT), G415, and D495 each bind ATP.

This sequence belongs to the chaperonin (HSP60) family. In terms of assembly, forms a cylinder of 14 subunits composed of two heptameric rings stacked back-to-back. Interacts with the co-chaperonin GroES.

Its subcellular location is the cytoplasm. It carries out the reaction ATP + H2O + a folded polypeptide = ADP + phosphate + an unfolded polypeptide.. Together with its co-chaperonin GroES, plays an essential role in assisting protein folding. The GroEL-GroES system forms a nano-cage that allows encapsulation of the non-native substrate proteins and provides a physical environment optimized to promote and accelerate protein folding. The protein is Chaperonin GroEL 4 of Rhizobium meliloti (strain 1021) (Ensifer meliloti).